Here is a 96-residue protein sequence, read N- to C-terminus: Co-chaperonin GroES (96 aa).

The protein belongs to the GroES chaperonin family. As to quaternary structure, heptamer of 7 subunits arranged in a ring. Interacts with the chaperonin GroEL.

The protein resides in the cytoplasm. Functionally, together with the chaperonin GroEL, plays an essential role in assisting protein folding. The GroEL-GroES system forms a nano-cage that allows encapsulation of the non-native substrate proteins and provides a physical environment optimized to promote and accelerate protein folding. GroES binds to the apical surface of the GroEL ring, thereby capping the opening of the GroEL channel. This chain is Co-chaperonin GroES, found in Aliivibrio fischeri (strain ATCC 700601 / ES114) (Vibrio fischeri).